The primary structure comprises 470 residues: Calmodulin-binding receptor-like cytoplasmic kinase 1 (470 aa).

2 disordered regions span residues 1-29 (MPMR…SWTD) and 65-128 (PTEC…SKSW). The span at 65 to 82 (PTECRSDPGESSTHDRES) shows a compositional bias: basic and acidic residues. 2 stretches are compositionally biased toward polar residues: residues 83–98 (TLSG…SFGR) and 108–121 (YRFS…PGKD). The 277-residue stretch at 147 to 423 (FSSVHQIGEG…MKGIAEKLWA (277 aa)) folds into the Protein kinase domain. ATP contacts are provided by residues 153 to 161 (IGEGGFGTV) and Lys-175. The tract at residues 162 to 185 (FKGKLDDGTIVAIKRARKNNYGKS) is caM-binding. Asp-273 functions as the Proton acceptor in the catalytic mechanism. Phosphoserine is present on residues Ser-277 and Ser-308. The residue at position 309 (Thr-309) is a Phosphothreonine. At Tyr-322 the chain carries Phosphotyrosine.

The protein belongs to the protein kinase superfamily. Ser/Thr protein kinase family. As to quaternary structure, interacts with calmodulin (CaM) in a Ca(2+)-dependent manner. Mg(2+) serves as cofactor. Post-translationally, autophosphorylated.

The protein resides in the cytoplasm. It catalyses the reaction L-seryl-[protein] + ATP = O-phospho-L-seryl-[protein] + ADP + H(+). The enzyme catalyses L-threonyl-[protein] + ATP = O-phospho-L-threonyl-[protein] + ADP + H(+). Up-regulated by Ca(2+)/CaM. This Arabidopsis thaliana (Mouse-ear cress) protein is Calmodulin-binding receptor-like cytoplasmic kinase 1 (CRCK1).